Consider the following 792-residue polypeptide: Homeobox protein HAZ1 (792 aa).

The tract at residues 1 to 154 (MDKTTTSDLV…RPPKGGTPKD (154 aa)) is disordered. Residues 15 to 36 (NIGSNAGSAQEPLTTNGKTSGV) show a composition bias toward polar residues. The segment covering 38-49 (NRYKQTVKRGRK) has biased composition (basic residues). Polar residues predominate over residues 51–67 (SQISPSKTYPLRSSHSN). A compositionally biased stretch (basic residues) spans 95-104 (VAKKRKRSKP). The segment covering 116 to 127 (TSEKKNKAHNEL) has biased composition (basic and acidic residues). The PHD-type zinc finger occupies 244–301 (DIFCAACGSKDVTLKNDIILCDGICDRGFHQYCLNPPLLAEDIPQGDEGWLCPACDCK). 2 disordered regions span residues 338–495 (QIDA…NSNL) and 529–599 (YGKA…SDQQ). Acidic residues predominate over residues 345-354 (PSDDSADNDY). Basic and acidic residues predominate over residues 362–371 (HKVDEEKSSG). Acidic residues-rich tracts occupy residues 373-389 (DGGE…EDSE) and 433-453 (DESN…DDFC). The segment at residues 610 to 669 (STAKNRHFGPAINQKLKAHFKEDPYPSRATKENLAQELGLTFNQVTKWFSSTRHYARVAA) is a DNA-binding region (homeobox). 2 disordered regions span residues 677–697 (ENHT…QLRG) and 711–792 (SEER…KTGR). Polar residues-rich tracts occupy residues 716 to 737 (GQSN…QSVA) and 746 to 760 (NQGN…TPNA). The segment covering 774–792 (DEARRKAVQRELRKMKTGR) has biased composition (basic and acidic residues).

This sequence belongs to the PHD-associated homeobox family. In terms of tissue distribution, expressed in roots, leaves, stems, panicle and seeds.

The protein localises to the nucleus. In terms of biological role, transcriptional repressor involved in the regulation of gibberrelin (GA) signaling. Binds to the 5'-GATC-3' motif of HD16/EL1 promoter. Functions as a positive regulator of GA signaling by suppressing the expression of HD16/EL1, a negative regulator of GA signaling. This chain is Homeobox protein HAZ1, found in Oryza sativa subsp. japonica (Rice).